The chain runs to 86 residues: Protein Vpu (86 aa).

Over 1 to 8 (MDIVQQVG) the chain is Extracellular. Residues 9-29 (LLVVLIIELVIVIVIWVKVYK) traverse the membrane as a helical segment. The Cytoplasmic portion of the chain corresponds to 30-86 (LCKEDRRQKKIDRLIARIRERAEDSGNESDGDTEELQDLITEGDNLMHIGIRDNRNN). 2 positions are modified to phosphoserine; by host CK2: Ser-54 and Ser-58.

This sequence belongs to the HIV-1 VPU protein family. As to quaternary structure, homopentamer. Interacts with host CD4 and BRTC; these interactions induce proteasomal degradation of CD4. Interacts with host BST2; this interaction leads to the degradation of host BST2. Interacts with host FBXW11. Interacts with host AP1M1; this interaction plays a role in the mistrafficking and subsequent degradation of host BST2. Interacts with host RANBP2; this interaction allows Vpu to down-regulate host BLM sumoylation. Forms pentamers or hexamers. Interacts with host CD4 and BRTC; these interactions induce proteasomal degradation of CD4. Interacts with host BST2; this interaction leads to the degradation of host BST2. Interacts with host FBXW11. Interacts with host AP1M1; this interaction plays a role in the mistrafficking and subsequent degradation of host BST2. In terms of processing, phosphorylated by host CK2. This phosphorylation is necessary for interaction with human BTRC and degradation of CD4.

It is found in the host membrane. With respect to regulation, ion channel activity is inhibited by hexamethylene amiloride in vitro. In terms of biological role, enhances virion budding by targeting host CD4 and Tetherin/BST2 to proteasome degradation. Degradation of CD4 prevents any unwanted premature interactions between viral Env and its host receptor CD4 in the endoplasmic reticulum. Degradation of antiretroviral protein Tetherin/BST2 is important for virion budding, as BST2 tethers new viral particles to the host cell membrane. Mechanistically, Vpu bridges either CD4 or BST2 to BTRC, a substrate recognition subunit of the Skp1/Cullin/F-box protein E3 ubiquitin ligase, induces their ubiquitination and subsequent proteasomal degradation. The alteration of the E3 ligase specificity by Vpu seems to promote the degradation of host IKBKB, leading to NF-kappa-B down-regulation and subsequent apoptosis. Acts as a viroporin that forms an oligomeric ion channel in membranes. Modulates the host DNA repair mechanisms to promote degradation of nuclear viral cDNA in cells that are already productively infected in order to suppress immune sensing and proviral hyper-integration (superinfection). Manipulates PML-NBs and modulates SUMOylation of host BLM protein thereby enhancing its DNA-end processing activity toward viral unintegrated linear DNA. Also inhibits RAD52-mediated homologous repair of viral cDNA, preventing the generation of dead-end circular forms of single copies of the long terminal repeat and permitting sustained nucleolytic attack. In Pan troglodytes (Chimpanzee), this protein is Protein Vpu.